Reading from the N-terminus, the 250-residue chain is Proteasome subunit alpha type-4-A (250 aa).

Glycyl lysine isopeptide (Lys-Gly) (interchain with G-Cter in ubiquitin) cross-links involve residues K40 and K64.

It belongs to the peptidase T1A family. In terms of assembly, component of the 20S core complex of the 26S proteasome. The 26S proteasome is composed of a core protease (CP), known as the 20S proteasome, capped at one or both ends by the 19S regulatory particle (RP/PA700). The 20S proteasome core is composed of 28 subunits that are arranged in four stacked rings, resulting in a barrel-shaped structure. The two end rings are each formed by seven alpha subunits, and the two central rings are each formed by seven beta subunits. The catalytic chamber with the active sites is on the inside of the barrel. Ubiquitous low levels, higher expression in siliques and flowers.

The protein resides in the cytoplasm. Its subcellular location is the nucleus. Its function is as follows. The proteasome is a multicatalytic proteinase complex which is characterized by its ability to cleave peptides with Arg, Phe, Tyr, Leu, and Glu adjacent to the leaving group at neutral or slightly basic pH. The proteasome has an ATP-dependent proteolytic activity. The polypeptide is Proteasome subunit alpha type-4-A (PAC1) (Arabidopsis thaliana (Mouse-ear cress)).